Reading from the N-terminus, the 506-residue chain is uncharacterized protein (506 aa).

To group II intron maturases.

The protein localises to the plastid. It is found in the chloroplast. This is an uncharacterized protein from Euglena gracilis.